The chain runs to 473 residues: Argininosuccinate lyase (473 aa).

Residues Ser-34, Asn-121, and Thr-166 each contribute to the 2-(N(omega)-L-arginino)succinate site. His-167 acts as the Proton acceptor in catalysis. The Proton donor role is filled by Ser-289. Residues Asn-297, Tyr-329, and Gln-334 each contribute to the 2-(N(omega)-L-arginino)succinate site.

It belongs to the lyase 1 family. Argininosuccinate lyase subfamily.

The catalysed reaction is 2-(N(omega)-L-arginino)succinate = fumarate + L-arginine. It functions in the pathway amino-acid biosynthesis; L-arginine biosynthesis; L-arginine from L-ornithine and carbamoyl phosphate: step 3/3. The protein is Argininosuccinate lyase (ARG7) of Chlamydomonas reinhardtii (Chlamydomonas smithii).